Consider the following 138-residue polypeptide: Basic phospholipase A2 DsM-b1/DsM-b1' (138 aa).

The signal sequence occupies residues 1-16; the sequence is MRTLWIVAMCLIGVEG. 7 disulfides stabilise this stretch: Cys-42-Cys-131, Cys-44-Cys-60, Cys-59-Cys-111, Cys-65-Cys-138, Cys-66-Cys-104, Cys-73-Cys-97, and Cys-91-Cys-102. Ca(2+) contacts are provided by Tyr-43, Gly-45, and Gly-47. Residue His-63 is part of the active site. Residue Asp-64 participates in Ca(2+) binding. Residue Asp-105 is part of the active site.

The cofactor is Ca(2+). As to expression, expressed by the venom gland.

It is found in the secreted. It carries out the reaction a 1,2-diacyl-sn-glycero-3-phosphocholine + H2O = a 1-acyl-sn-glycero-3-phosphocholine + a fatty acid + H(+). Its function is as follows. Exhibits high hydrolytic activities and shows strong preference for the anionic micelles (dPPC with deoxycholate) to the zwitterionic micelles (dPPC with Triton X-100). PLA2 catalyzes the calcium-dependent hydrolysis of the 2-acyl groups in 3-sn-phosphoglycerides. The chain is Basic phospholipase A2 DsM-b1/DsM-b1' from Daboia siamensis (Eastern Russel's viper).